A 345-amino-acid polypeptide reads, in one-letter code: Phosphoribosylformylglycinamidine cyclo-ligase (345 aa).

Belongs to the AIR synthase family.

Its subcellular location is the cytoplasm. It catalyses the reaction 2-formamido-N(1)-(5-O-phospho-beta-D-ribosyl)acetamidine + ATP = 5-amino-1-(5-phospho-beta-D-ribosyl)imidazole + ADP + phosphate + H(+). Its pathway is purine metabolism; IMP biosynthesis via de novo pathway; 5-amino-1-(5-phospho-D-ribosyl)imidazole from N(2)-formyl-N(1)-(5-phospho-D-ribosyl)glycinamide: step 2/2. This chain is Phosphoribosylformylglycinamidine cyclo-ligase, found in Staphylococcus carnosus (strain TM300).